The chain runs to 185 residues: uncharacterized protein (185 aa).

To M.thermoautotrophicum MTH236.

This is an uncharacterized protein from Methanocaldococcus jannaschii (strain ATCC 43067 / DSM 2661 / JAL-1 / JCM 10045 / NBRC 100440) (Methanococcus jannaschii).